The primary structure comprises 586 residues: Arginine--tRNA ligase (586 aa).

A 'HIGH' region motif is present at residues Ala131–His141.

It belongs to the class-I aminoacyl-tRNA synthetase family. Monomer.

It is found in the cytoplasm. The enzyme catalyses tRNA(Arg) + L-arginine + ATP = L-arginyl-tRNA(Arg) + AMP + diphosphate. This Rhizobium rhizogenes (strain K84 / ATCC BAA-868) (Agrobacterium radiobacter) protein is Arginine--tRNA ligase.